Consider the following 471-residue polypeptide: ATP synthase subunit beta (471 aa).

156–163 is a binding site for ATP; sequence GGAGVGKT.

This sequence belongs to the ATPase alpha/beta chains family. In terms of assembly, F-type ATPases have 2 components, CF(1) - the catalytic core - and CF(0) - the membrane proton channel. CF(1) has five subunits: alpha(3), beta(3), gamma(1), delta(1), epsilon(1). CF(0) has three main subunits: a(1), b(2) and c(9-12). The alpha and beta chains form an alternating ring which encloses part of the gamma chain. CF(1) is attached to CF(0) by a central stalk formed by the gamma and epsilon chains, while a peripheral stalk is formed by the delta and b chains.

It is found in the cell membrane. It catalyses the reaction ATP + H2O + 4 H(+)(in) = ADP + phosphate + 5 H(+)(out). Produces ATP from ADP in the presence of a proton gradient across the membrane. The catalytic sites are hosted primarily by the beta subunits. The sequence is that of ATP synthase subunit beta from Lawsonia intracellularis (strain PHE/MN1-00).